Here is a 139-residue protein sequence, read N- to C-terminus: Small ribosomal subunit protein uS11 (139 aa).

Belongs to the universal ribosomal protein uS11 family. Part of the 30S ribosomal subunit.

In terms of biological role, located on the platform of the 30S subunit. This is Small ribosomal subunit protein uS11 from Pyrobaculum islandicum (strain DSM 4184 / JCM 9189 / GEO3).